Reading from the N-terminus, the 274-residue chain is Imidazole glycerol phosphate synthase subunit HisF (274 aa).

Residues Asp11 and Asp134 contribute to the active site.

It belongs to the HisA/HisF family. Heterodimer of HisH and HisF.

The protein resides in the cytoplasm. The catalysed reaction is 5-[(5-phospho-1-deoxy-D-ribulos-1-ylimino)methylamino]-1-(5-phospho-beta-D-ribosyl)imidazole-4-carboxamide + L-glutamine = D-erythro-1-(imidazol-4-yl)glycerol 3-phosphate + 5-amino-1-(5-phospho-beta-D-ribosyl)imidazole-4-carboxamide + L-glutamate + H(+). Its pathway is amino-acid biosynthesis; L-histidine biosynthesis; L-histidine from 5-phospho-alpha-D-ribose 1-diphosphate: step 5/9. Functionally, IGPS catalyzes the conversion of PRFAR and glutamine to IGP, AICAR and glutamate. The HisF subunit catalyzes the cyclization activity that produces IGP and AICAR from PRFAR using the ammonia provided by the HisH subunit. The protein is Imidazole glycerol phosphate synthase subunit HisF of Methanosphaera stadtmanae (strain ATCC 43021 / DSM 3091 / JCM 11832 / MCB-3).